The sequence spans 349 residues: AA9 family lytic polysaccharide monooxygenase A (349 aa).

An N-terminal signal peptide occupies residues 1 to 19 (MKSTFGLLALAAAAKLVSA). The Cu(2+) site is built by His-20 and His-102. A disulfide bridge links Cys-62 with Cys-183. An O2-binding site is contributed by His-169. Residue Tyr-180 participates in Cu(2+) binding. Residues 233-304 (DGSSSGSSGS…SGSNSGSDSC (72 aa)) form a disordered region. Low complexity-rich tracts occupy residues 234-262 (GSSSGSSGSSGSSPATTTAPAVSVTAVPT) and 269-304 (TSATPTTFVTATKPATTAAPAAPSASSGSNSGSDSC). Residues 311-347 (GSVKIYGQCGGQNYSGPTSCEAGLICKEWNPYYHQCV) form the CBM1 domain. Asn-323 carries N-linked (GlcNAc...) asparagine glycosylation.

Belongs to the polysaccharide monooxygenase AA9 family. Cu(2+) is required as a cofactor.

The protein localises to the secreted. The catalysed reaction is [(1-&gt;4)-beta-D-glucosyl]n+m + reduced acceptor + O2 = 4-dehydro-beta-D-glucosyl-[(1-&gt;4)-beta-D-glucosyl]n-1 + [(1-&gt;4)-beta-D-glucosyl]m + acceptor + H2O.. Functionally, lytic polysaccharide monooxygenase (LPMO) that depolymerizes crystalline and amorphous polysaccharides via the oxidation of scissile alpha- or beta-(1-4)-glycosidic bonds, yielding C4 oxidation products. Catalysis by LPMOs requires the reduction of the active-site copper from Cu(II) to Cu(I) by a reducing agent and H(2)O(2) or O(2) as a cosubstrate. The polypeptide is AA9 family lytic polysaccharide monooxygenase A (eglD) (Aspergillus fumigatus (strain CBS 144.89 / FGSC A1163 / CEA10) (Neosartorya fumigata)).